The chain runs to 682 residues: MGALTSRQHAGVEEVDIPSNSVYRYPPKSGSYFASHFIMGGEKFDCTHPEGYLFGENSDLNFLGNRPVSFPYAAPPPHEPVKTLRSLINIRKDTLRLVKCAEEVKSHGEEAGKAKVHYNVEFTFDTDARVAITIYYQATEEFQNGIASYIPKDNSLQSETVHYKRGVCQQFCLPSHTVDPSEWAEEELGFDLDREVYPLVVHAVVDEGDEYFGHCHVLLGTFEKHSDGTFCVKPLKQKQVWDGVTYLLQEDYGIENKSNTQDFKVAEDDVRDNSAECVVCLSDVRDTLILPCRHCASCNVHCADTLRYQANNCPICRLPFRALLQIRAMRKKLGPLSPSSFNPIISSQTSDSEEHSSSENIPAGYEVVSLLEALNGPLTSSPAVPPLHVLGDGHLSGMLPSYGSDGHLPPVRTLSPLDHLSDCNSQGLKLNKSLSKSISQNSSVLHEEEDERSCSESDTQLSQRLSAQHPEEGPDVTPESENLTLSSSGAVDQSSCTGTPLSSTISSPEDPASSSLAQSVMSMASSQISTDTVSSMSGSYIAPGTEEEGEAPPSPRAASRAPSEEEETPAESPDSNFAGLPAGEQDAEGNDIMEEEDRSPVQEDGQRTCAFLGMECDNNNDFDVASVKALDNKLCSEVCLPGTWQHDAAIINRHNTQRRRLSPSSLEDPEEDRPCVWDPLAV.

A lipid anchor (N-myristoyl glycine) is attached at glycine 2. The RING-type; degenerate zinc finger occupies 277–317 (CVVCLSDVRDTLILPCRHCASCNVHCADTLRYQANNCPICR). Positions 330 to 333 (RKKL) match the D-box 1 motif. Disordered stretches follow at residues 440–604 (QNSS…VQED) and 655–682 (NTQRRRLSPSSLEDPEEDRPCVWDPLAV). Residues 479–538 (ESENLTLSSSGAVDQSSCTGTPLSSTISSPEDPASSSLAQSVMSMASSQISTDTVSSMSG) show a composition bias toward polar residues. The segment covering 585-597 (QDAEGNDIMEEED) has biased composition (acidic residues). Residues 658 to 661 (RRRL) carry the D-box 2 motif. Residues serine 662, serine 664, and serine 665 each carry the phosphoserine modification.

Interacts with APBB1. Interacts with CHD1; CHD1-binding controls RNF157 stability. Also interacts with ATRN, MEGF8, TECR, MSI2, PLRG1, BYSL, MTERF3, PSMA1, MRPS18B, PRPF4, FASTKD2, SLC25A1, SMU1, CNOT9, MRPS2, MAGT1, FXR2, EMD, PSMD8, HDAC1, RAN, HSD17B12, TXNDC5 and MRPL19. As to expression, predominantly expressed in the brain.

It is found in the cytoplasm. The enzyme catalyses S-ubiquitinyl-[E2 ubiquitin-conjugating enzyme]-L-cysteine + [acceptor protein]-L-lysine = [E2 ubiquitin-conjugating enzyme]-L-cysteine + N(6)-ubiquitinyl-[acceptor protein]-L-lysine.. In terms of biological role, E3 ubiquitin ligase that ubiquitinates APBB1 for its degradation by the proteasome and thus prevents apoptosis and promotes survival of neurons. Has a dual role in neurons as it is also required for dendrite growth and maintenance for which its ligase activity is not critical. May act as a scaffold molecule to regulate this process. Acts as a downstream effector of the interconnected PI3K and MAPK signaling pathways and thus participates in the regulation of the cell cycle. The chain is E3 ubiquitin ligase Rnf157 (Rnf157) from Rattus norvegicus (Rat).